A 1148-amino-acid polypeptide reads, in one-letter code: Putative ATP-dependent RNA helicase rha-2 (1148 aa).

Residues 1 to 10 (MGKRKTKEDN) are compositionally biased toward basic and acidic residues. Disordered stretches follow at residues 1–51 (MGKR…FAKE) and 101–163 (STKL…DAGN). A compositionally biased stretch (acidic residues) spans 138–160 (PTDDESSSEEEEEEEEGDNDIED). One can recognise a Helicase ATP-binding domain in the interval 246-412 (VEAINENLVT…KLFPLLTPKV (167 aa)). 259–266 (GETGSGKT) is a binding site for ATP. The DEAH box signature appears at 355–358 (DEAH). The 241-residue stretch at 463 to 703 (EVKQLITKLK…QLVLHLKSMN (241 aa)) folds into the Helicase C-terminal domain.

The protein belongs to the DEAD box helicase family. DEAH subfamily.

It catalyses the reaction ATP + H2O = ADP + phosphate + H(+). Its function is as follows. Probable ATP-binding RNA helicase. The sequence is that of Putative ATP-dependent RNA helicase rha-2 (rha-2) from Caenorhabditis elegans.